The sequence spans 2157 residues: Polyketide synthase 2 (2157 aa).

The N-terminal acylcarrier protein transacylase domain (SAT) stretch occupies residues 7-244 (FIFGDQTGGF…IPIPIWAPYH (238 aa)). The Ketosynthase family 3 (KS3) domain maps to 374–807 (DAKIAIIGMS…GGNSALLLED (434 aa)). Catalysis depends on for beta-ketoacyl synthase activity residues cysteine 546, histidine 681, and histidine 723. A malonyl-CoA:ACP transacylase (MAT) domain region spans residues 908–1213 (GFVFSGQGAQ…ASLHRKDDGW (306 aa)). The active-site For acyl/malonyl transferase activity is the serine 998. A product template (PT) domain region spans residues 1290–1605 (TSSVQKIIQQ…RSLLNKVLPP (316 aa)). The interval 1294–1428 (QKIIQQTDGP…CLLCFADPNS (135 aa)) is N-terminal hotdog fold. The region spanning 1294 to 1600 (QKIIQQTDGP…FLGMSRSLLN (307 aa)) is the PKS/mFAS DH domain. The active-site Proton acceptor; for dehydratase activity is histidine 1327. Residues 1455–1600 (TDSLLSKGIV…FLGMSRSLLN (146 aa)) form a C-terminal hotdog fold region. The active-site Proton donor; for dehydratase activity is the aspartate 1514. Positions 1629–1653 (AKDTERRPLDIPTRAQRQPNSPPTG) are disordered. The Carrier 1 domain occupies 1649–1726 (SPPTGTLGRI…ELKEFLGADQ (78 aa)). Serine 1686 bears the O-(pantetheine 4'-phosphoryl)serine mark. The interval 1729–1765 (DDAVACESSNGQHTPQTSDKGSGTLAAQKPDDDTGSD) is disordered. A compositionally biased stretch (polar residues) spans 1735 to 1749 (ESSNGQHTPQTSDKG). The 75-residue stretch at 1765 to 1839 (DTTLHRVCAI…SLQKALCGTE (75 aa)) folds into the Carrier 2 domain. Residue serine 1799 is modified to O-(pantetheine 4'-phosphoryl)serine. Residues 1875 to 2151 (ASPPHATSIL…MAEMGDLIGE (277 aa)) form a thioesterase (TE) domain region. The For thioesterase activity role is filled by serine 1981.

Polyketide synthase; part of the Pks2 gene cluster that mediates the formation of infectious structures (appressoria), enabling these fungi to kill insects faster. The product of the Pks2 gene cluster is different from the one of Pks1 and has still not been identified. This Metarhizium guizhouense (strain ARSEF 977) protein is Polyketide synthase 2.